Here is a 216-residue protein sequence, read N- to C-terminus: Large ribosomal subunit protein uL3 (216 aa).

Residues 137-157 (GASHGAHKNHRKPGSIGGAST) are disordered.

It belongs to the universal ribosomal protein uL3 family. In terms of assembly, part of the 50S ribosomal subunit. Forms a cluster with proteins L14 and L19.

Functionally, one of the primary rRNA binding proteins, it binds directly near the 3'-end of the 23S rRNA, where it nucleates assembly of the 50S subunit. This chain is Large ribosomal subunit protein uL3, found in Paenarthrobacter aurescens (strain TC1).